Consider the following 512-residue polypeptide: MAPPITDDDLDGLKQPYVTFSSGSASPPRSTAEAMDFEEQILEAIKSDAFLVDWIGEDDKGNPQNLPYWRKWVITMSLALYALSTTFSSSVFGAATHVLAEEFALPAETVVLGCTSLFMVGFATGPIFWGPFSEAFGRTRPLLAGYLGFAVLQLPIADARSLTSICILRFLGGFFGAAPSSILSGILADIWSPRERGFAMPTVGAFLTIGPILGPLIGSVLVQSVLGWRWIANVVAIASFLIALSTFPFLPETYTPLLLARRAERMRHMTRNWAYRSKSEEAQSSIGDFAERYLLRPARMLALEPILLMMTLYVSVSFGLLYNFFLAYPTSFIQERGWDQTTASLPLISILVGAIIAGALLSFSTNSRWAPNAKEGRPQETRLLLMMVGAVSLPAGMFLFAWTSSATMNPWPQILSGIPTGFGIHLINMQGMNYIIDSYKIYANSAIAANTFLRSLFAAGFPILATSMYAAIGVKWGTTILALLAVAMIPIPILFYYFGAKIRAKSKWQPPL.

A run of 12 helical transmembrane segments spans residues 72-92, 110-130, 142-162, 170-190, 202-222, 230-250, 306-326, 343-363, 383-403, 407-427, 456-476, and 480-500; these read WVIT…SSVF, VVLG…IFWG, LLAG…ARSL, FLGG…LADI, TVGA…SVLV, WIAN…FPFL, ILLM…NFFL, ASLP…LLSF, LLLM…FAWT, TMNP…IHLI, LFAA…GVKW, and ILAL…YFGA.

The protein belongs to the major facilitator superfamily. CAR1 family.

The protein localises to the cell membrane. Functionally, MFS transporter; part of the gene cluster that mediates the biosynthesis of cercosporin, a light-activated, non-host-selective toxin. The perylenequinone chromophore of cercosporin absorbs light energy to attain an electronically-activated triplet state and produces active oxygen species such as the hydroxyl radical, superoxide, hydrogen peroxide or singlet oxygen upon reaction with oxygen molecules. These reactive oxygen species cause damage to various cellular components including lipids, proteins and nucleic acids. Responsible for secretion and accumulation of cercosporin, but does not play any roles in self-protection against the toxicity of cercosporin. The sequence is that of Cercosporin MFS transporter CTB4 from Cercospora nicotianae (Barn spot disease fungus).